The sequence spans 209 residues: Small ribosomal subunit protein uS4 (209 aa).

The region spanning 98 to 161 (ARLDNVVYRM…RDLEVIKKAV (64 aa)) is the S4 RNA-binding domain.

This sequence belongs to the universal ribosomal protein uS4 family. In terms of assembly, part of the 30S ribosomal subunit. Contacts protein S5. The interaction surface between S4 and S5 is involved in control of translational fidelity.

In terms of biological role, one of the primary rRNA binding proteins, it binds directly to 16S rRNA where it nucleates assembly of the body of the 30S subunit. Its function is as follows. With S5 and S12 plays an important role in translational accuracy. In Thermotoga petrophila (strain ATCC BAA-488 / DSM 13995 / JCM 10881 / RKU-1), this protein is Small ribosomal subunit protein uS4.